A 689-amino-acid polypeptide reads, in one-letter code: Glycine--tRNA ligase beta subunit (689 aa).

It belongs to the class-II aminoacyl-tRNA synthetase family. Tetramer of two alpha and two beta subunits.

The protein resides in the cytoplasm. The catalysed reaction is tRNA(Gly) + glycine + ATP = glycyl-tRNA(Gly) + AMP + diphosphate. This is Glycine--tRNA ligase beta subunit from Actinobacillus pleuropneumoniae serotype 5b (strain L20).